We begin with the raw amino-acid sequence, 279 residues long: NADPH-dependent 7-cyano-7-deazaguanine reductase (279 aa).

Substrate is bound at residue 86 to 88; it reads IES. Residue 88–89 participates in NADPH binding; the sequence is SK. Catalysis depends on cysteine 187, which acts as the Thioimide intermediate. The active-site Proton donor is the aspartate 194. 226 to 227 contacts substrate; it reads HE. Residue 255–256 coordinates NADPH; it reads RG.

Belongs to the GTP cyclohydrolase I family. QueF type 2 subfamily. In terms of assembly, homodimer.

The protein localises to the cytoplasm. It catalyses the reaction 7-aminomethyl-7-carbaguanine + 2 NADP(+) = 7-cyano-7-deazaguanine + 2 NADPH + 3 H(+). The protein operates within tRNA modification; tRNA-queuosine biosynthesis. In terms of biological role, catalyzes the NADPH-dependent reduction of 7-cyano-7-deazaguanine (preQ0) to 7-aminomethyl-7-deazaguanine (preQ1). This is NADPH-dependent 7-cyano-7-deazaguanine reductase from Haemophilus ducreyi (strain 35000HP / ATCC 700724).